A 220-amino-acid polypeptide reads, in one-letter code: MSIRILLVEDDDHICNTVRAFLAEARYEVDACTDGNEAHTKFYENTYQLVILDIMLPGMNGHELLREFRAQNDTPILMMTALSDDENQIRAFDAEADDYVTKPFKMRILLKRVEALLRRSGALAKEFRVGRLTLLPEDFRVLCDGTELPLTRKEFEILLLLVQNKGRTLTHEIILSRIWGYDFDGDGSTVHTHIKNLRAKLPENIIKTIRGVGYRLEESL.

Positions 4–117 constitute a Response regulatory domain; that stretch reads RILLVEDDDH…ILLKRVEALL (114 aa). Residue Asp53 is modified to 4-aspartylphosphate. The ompR/PhoB-type DNA-binding region spans 124 to 218; sequence AKEFRVGRLT…IRGVGYRLEE (95 aa).

Post-translationally, may be phosphorylated by VanSB. May also be dephosphorylated by VanSB.

The protein localises to the cytoplasm. Its function is as follows. Member of the two-component regulatory system VanSB/VanRB. Activates the transcription of vanSB, vanYB and vanW in response to vancomycin which results in vancomycin resistance. This is Regulatory protein VanRB (vanRB) from Enterococcus faecalis (strain ATCC 700802 / V583).